The following is a 535-amino-acid chain: Serine/threonine-protein kinase C (535 aa).

A Protein kinase domain is found at 12–277 (YRIIETLGRG…AMAQTLQGNF (266 aa)). ATP contacts are provided by residues 18–26 (LGRGGFGET) and lysine 43. Aspartate 142 (proton acceptor) is an active-site residue. The segment at 371–535 (NNPPPAVEEP…GEKPIDPEQN (165 aa)) is disordered. Residues 402 to 421 (SPIPTPATPSPEPTPSPSPS) show a composition bias toward pro residues. Positions 422 to 435 (PETTSSPTEDTITP) are enriched in low complexity. Composition is skewed to pro residues over residues 446 to 464 (APIP…PQPS) and 472 to 498 (TPAP…PTPQ).

The protein belongs to the protein kinase superfamily. Ser/Thr protein kinase family.

The catalysed reaction is L-seryl-[protein] + ATP = O-phospho-L-seryl-[protein] + ADP + H(+). It catalyses the reaction L-threonyl-[protein] + ATP = O-phospho-L-threonyl-[protein] + ADP + H(+). The protein is Serine/threonine-protein kinase C (spkC) of Synechocystis sp. (strain ATCC 27184 / PCC 6803 / Kazusa).